A 295-amino-acid chain; its full sequence is Fatty acyl-CoA reductase (295 aa).

Thr21–Gly28 serves as a coordination point for NADP(+). Ser153 contacts substrate. The active-site Proton acceptor is the Tyr166.

It belongs to the short-chain dehydrogenases/reductases (SDR) family.

It catalyses the reaction hexadecanal + NADP(+) + CoA = hexadecanoyl-CoA + NADPH + H(+). In terms of biological role, catalyzes the NADPH-dependent reduction of long chain acyl-CoA (with chain lengths of 14 to 22 carbons) to the corresponding aldehyde. This is Fatty acyl-CoA reductase (acr1) from Acinetobacter baylyi (strain ATCC 33305 / BD413 / ADP1).